The following is a 629-amino-acid chain: FAST kinase domain-containing protein 4 (629 aa).

An RAP domain is found at 559-617; sequence IAFLRWEFPNFNSRSKDLLGRFVLARRHVLAAGFLVVDVPYYEWLDLKSEWQKTAYLKD.

It belongs to the FAST kinase family.

It is found in the mitochondrion matrix. Plays a role in processing of mitochondrial RNA precursors and in stabilization of a subset of mature mitochondrial RNA species, such as MT-CO1, MT-CO2, MT-CYB, MT-CO3, MT-ND3, MT-ND5 and MT-ATP8/6. May play a role in cell cycle progression. The polypeptide is FAST kinase domain-containing protein 4 (Tbrg4) (Rattus norvegicus (Rat)).